A 254-amino-acid polypeptide reads, in one-letter code: L-rhamnose 1-dehydrogenase (NADP(+)) (254 aa).

The NADP(+) site is built by Gly-13, Ser-15, Arg-16, Ile-18, Asp-64, and Asn-91. The active-site Proton donor is the Ser-144. 4 residues coordinate beta-L-rhamnose: Ser-144, Ser-146, Gln-154, and Tyr-157. 2 residues coordinate NADP(+): Tyr-157 and Lys-161. Tyr-157 serves as the catalytic Proton acceptor. Lys-161 functions as the Lowers pKa of active site Tyr in the catalytic mechanism. Residue Thr-189 participates in beta-L-rhamnose binding. Ile-190 lines the NADP(+) pocket. Asn-195 contributes to the beta-L-rhamnose binding site.

The protein belongs to the short-chain dehydrogenases/reductases (SDR) family.

The catalysed reaction is L-rhamnofuranose + NADP(+) = L-rhamnono-1,4-lactone + NADPH + H(+). It participates in carbohydrate degradation; L-rhamnose degradation. In terms of biological role, involved in the non-phosphorylated metabolic pathway of L-rhamnose catabolism. Catalyzes the oxidation of L-rhamnose to yield L-rhamnono-1,4-lactone. It can also oxidize L-lyxose and L-mannose, and uses only NADP. This chain is L-rhamnose 1-dehydrogenase (NADP(+)), found in Thermoplasma acidophilum (strain ATCC 25905 / DSM 1728 / JCM 9062 / NBRC 15155 / AMRC-C165).